A 234-amino-acid polypeptide reads, in one-letter code: Ribulose-phosphate 3-epimerase (234 aa).

A substrate-binding site is contributed by S7. H32, D34, and H65 together coordinate a divalent metal cation. The active-site Proton acceptor is D34. Residues H65, 139 to 142 (GFSG), 172 to 174 (DGG), and 194 to 195 (AS) each bind substrate. Residue D172 coordinates a divalent metal cation. Residue D172 is the Proton donor of the active site.

The protein belongs to the ribulose-phosphate 3-epimerase family. It depends on a divalent metal cation as a cofactor.

It carries out the reaction D-ribulose 5-phosphate = D-xylulose 5-phosphate. The protein operates within carbohydrate degradation. In terms of biological role, catalyzes the reversible epimerization of D-ribulose 5-phosphate to D-xylulose 5-phosphate. In Methanocaldococcus jannaschii (strain ATCC 43067 / DSM 2661 / JAL-1 / JCM 10045 / NBRC 100440) (Methanococcus jannaschii), this protein is Ribulose-phosphate 3-epimerase.